Reading from the N-terminus, the 473-residue chain is ATP synthase subunit beta (473 aa).

ATP is bound at residue 153–160 (GGAGVGKT).

This sequence belongs to the ATPase alpha/beta chains family. As to quaternary structure, F-type ATPases have 2 components, CF(1) - the catalytic core - and CF(0) - the membrane proton channel. CF(1) has five subunits: alpha(3), beta(3), gamma(1), delta(1), epsilon(1). CF(0) has three main subunits: a(1), b(2) and c(9-12). The alpha and beta chains form an alternating ring which encloses part of the gamma chain. CF(1) is attached to CF(0) by a central stalk formed by the gamma and epsilon chains, while a peripheral stalk is formed by the delta and b chains.

It localises to the cell inner membrane. The enzyme catalyses ATP + H2O + 4 H(+)(in) = ADP + phosphate + 5 H(+)(out). Produces ATP from ADP in the presence of a proton gradient across the membrane. The catalytic sites are hosted primarily by the beta subunits. This Rickettsia bellii (strain OSU 85-389) protein is ATP synthase subunit beta.